The chain runs to 266 residues: F-box/kelch-repeat protein At4g39560 (266 aa).

Positions 24–70 (STQILSLPVDLLISILARVSRLDYPILSLVSKSFRSLIASPELYETR) constitute an F-box domain. 3 Kelch repeats span residues 130 to 176 (DIYN…VIDG), 178 to 223 (IYVA…KSAV), and 226 to 266 (EAIC…LLVA).

The chain is F-box/kelch-repeat protein At4g39560 from Arabidopsis thaliana (Mouse-ear cress).